The chain runs to 2126 residues: Polycystin family receptor for egg jelly (2126 aa).

The first 18 residues, 1-18, serve as a signal peptide directing secretion; it reads MWPGPALLLLGLGLGLGS. At 19 to 1068 the chain is on the extracellular side; that stretch reads QPPPTGPRGL…AIISNLTQNP (1050 aa). The disordered stretch occupies residues 20–71; the sequence is PPPTGPRGLPGVLRGAPGLGQGAESSVRGGDTGGLSPRAAPRHASPTPPRRC. N-linked (GlcNAc...) asparagine glycosylation is found at Asn-84, Asn-94, Asn-129, Asn-192, Asn-243, Asn-325, Asn-571, Asn-761, Asn-774, Asn-807, Asn-849, Asn-888, Asn-960, and Asn-1063. In terms of domain architecture, REJ spans 102–797; it reads CIMQPVKINR…SMMFCEFADD (696 aa). The helical transmembrane segment at 1069-1089 threads the bilayer; the sequence is ATFLAVLFIMILYAILAFWAL. Topologically, residues 1090–1273 are cytoplasmic; sequence HRDVIDLYFR…VPKPFNRLQR (184 aa). The 118-residue stretch at 1114 to 1231 folds into the PLAT domain; the sequence is LCYLVTIFTG…TLDATFSVTN (118 aa). The helical transmembrane segment at 1274-1294 threads the bilayer; that stretch reads LSCCLAMLLSSLVCNIMFFNL. The Extracellular portion of the chain corresponds to 1295–1311; the sequence is NQKEKIESRHMHIIRSM. The chain crosses the membrane as a helical span at residues 1312-1332; that stretch reads LIGIESVVITIPVQLLITFFF. At 1333 to 1449 the chain is on the cytoplasmic side; the sequence is TYSQKNLKMN…KTQIILPRWC (117 aa). Positions 1379–1431 are disordered; that stretch reads RAAVSTSAPEEKEAFETSQKHEKADTQMSNKNSSNNNQEASEGVPPKAFSSQP. Residues 1387–1403 are compositionally biased toward basic and acidic residues; the sequence is PEEKEAFETSQKHEKAD. The chain crosses the membrane as a helical span at residues 1450–1470; it reads VYIAWFLVFATSGISSFFIVF. The Extracellular segment spans residues 1471 to 1483; it reads YGVTYGYAKSIEW. A helical transmembrane segment spans residues 1484 to 1504; the sequence is LFASFCSFCQSVFLVQPCNIL. Over 1505–1580 the chain is Cytoplasmic; the sequence is LRSGTRSYKP…RRENRIRRRS (76 aa). A helical membrane pass occupies residues 1581–1601; the sequence is FLFLSYLVTHFIFLTLLLLLI. At 1602 to 1838 the chain is on the extracellular side; it reads FSLRHNDSFY…DFNRKTSSEI (237 aa). N-linked (GlcNAc...) asparagine glycans are attached at residues Asn-1607, Asn-1676, Asn-1766, and Asn-1817. The chain crosses the membrane as a helical span at residues 1839-1859; the sequence is YLYAAILIFFCAYVVDEGYII. Over 1860-1875 the chain is Cytoplasmic; the sequence is RQERASYIRSVYNLLN. The chain crosses the membrane as a helical span at residues 1876–1896; that stretch reads FSLKCMFALLIVLFFWKYFLA. The Extracellular portion of the chain corresponds to 1897–1918; it reads TKMVQLYLADPEAFIPFHAVSR. A helical membrane pass occupies residues 1919–1939; sequence VDHFMRIILAFLLFLTILKTL. Residues 1940–1964 lie on the Cytoplasmic side of the membrane; it reads RYSRFFYNVRLAQKAIQAALPGICH. Residues 1965-1985 form a helical membrane-spanning segment; it reads TALVVSIYSFMYVAFGYLVFG. Residues 1986–2019 are Extracellular-facing; it reads QHEWNYSNMIHATQTIFSYCVSAFQNTEFSGNKV. A helical membrane pass occupies residues 2020–2040; the sequence is LGVLFLSSFMLVMICIFINLF. The Cytoplasmic portion of the chain corresponds to 2041-2126; that stretch reads QAVILSAYDE…NGKKMIYLVV (86 aa).

This sequence belongs to the polycystin family. As to expression, exclusively expressed in testis.

It localises to the cell membrane. It is found in the cytoplasmic vesicle. The protein resides in the secretory vesicle. The protein localises to the acrosome membrane. Its subcellular location is the nucleus. Testis-specific protein that controls sperm transport and the timing of zona pellucida-evoked exocytosis of the sperm acrosome. The chain is Polycystin family receptor for egg jelly (Pkdrej) from Mus musculus (Mouse).